Consider the following 487-residue polypeptide: Putative sugar kinase YoaC (487 aa).

The protein belongs to the FGGY kinase family.

This is Putative sugar kinase YoaC (yoaC) from Bacillus subtilis (strain 168).